The following is a 63-amino-acid chain: Conotoxin Cal6.28 (63 aa).

A signal peptide spans M1 to A22. Cystine bridges form between C34-C45, C37-C51, and C44-C58.

It belongs to the conotoxin O1 superfamily. As to expression, expressed by the venom duct.

The protein resides in the secreted. Its function is as follows. Probable neurotoxin. The polypeptide is Conotoxin Cal6.28 (Californiconus californicus (California cone)).